The primary structure comprises 1011 residues: DNA-directed RNA polymerase subunit beta'' (1011 aa).

Residues Cys216, Cys282, Cys288, and Cys291 each contribute to the Zn(2+) site.

Belongs to the RNA polymerase beta' chain family. RpoC2 subfamily. In terms of assembly, in plastids the minimal PEP RNA polymerase catalytic core is composed of four subunits: alpha, beta, beta', and beta''. When a (nuclear-encoded) sigma factor is associated with the core the holoenzyme is formed, which can initiate transcription. The cofactor is Zn(2+).

It localises to the plastid. Its subcellular location is the chloroplast. The enzyme catalyses RNA(n) + a ribonucleoside 5'-triphosphate = RNA(n+1) + diphosphate. In terms of biological role, DNA-dependent RNA polymerase catalyzes the transcription of DNA into RNA using the four ribonucleoside triphosphates as substrates. This chain is DNA-directed RNA polymerase subunit beta'', found in Ostreococcus tauri.